A 955-amino-acid polypeptide reads, in one-letter code: Glycine dehydrogenase (decarboxylating) (955 aa).

An N6-(pyridoxal phosphate)lysine modification is found at K705.

It belongs to the GcvP family. The glycine cleavage system is composed of four proteins: P, T, L and H. It depends on pyridoxal 5'-phosphate as a cofactor.

It catalyses the reaction N(6)-[(R)-lipoyl]-L-lysyl-[glycine-cleavage complex H protein] + glycine + H(+) = N(6)-[(R)-S(8)-aminomethyldihydrolipoyl]-L-lysyl-[glycine-cleavage complex H protein] + CO2. Its function is as follows. The glycine cleavage system catalyzes the degradation of glycine. The P protein binds the alpha-amino group of glycine through its pyridoxal phosphate cofactor; CO(2) is released and the remaining methylamine moiety is then transferred to the lipoamide cofactor of the H protein. In Aliivibrio fischeri (strain MJ11) (Vibrio fischeri), this protein is Glycine dehydrogenase (decarboxylating).